The sequence spans 416 residues: Signal recognition particle receptor FtsY (416 aa).

A compositionally biased stretch (basic residues) spans 1-10 (MFSFFRRKKK). The disordered stretch occupies residues 1–24 (MFSFFRRKKKQETPALEEAQVQET). Residues 224-231 (GINGAGKT), 304-308 (DTAGR), and 368-371 (TKLD) each bind GTP.

The protein belongs to the GTP-binding SRP family. FtsY subfamily. As to quaternary structure, part of the signal recognition particle protein translocation system, which is composed of SRP and FtsY. SRP is a ribonucleoprotein composed of Ffh and a 4.5S RNA molecule. The cofactor is Mg(2+).

The protein resides in the cell membrane. It localises to the cytoplasm. It catalyses the reaction GTP + H2O = GDP + phosphate + H(+). In terms of biological role, involved in targeting and insertion of nascent membrane proteins into the cytoplasmic membrane. Acts as a receptor for the complex formed by the signal recognition particle (SRP) and the ribosome-nascent chain (RNC). Interaction with SRP-RNC leads to the transfer of the RNC complex to the Sec translocase for insertion into the membrane, the hydrolysis of GTP by both Ffh and FtsY, and the dissociation of the SRP-FtsY complex into the individual components. This chain is Signal recognition particle receptor FtsY, found in Neisseria gonorrhoeae.